The primary structure comprises 258 residues: Ferredoxin--NADP reductase (258 aa).

Positions 2–102 (SNLNVERVLS…RKPTGTLVTS (101 aa)) constitute an FAD-binding FR-type domain. Asp-17 lines the NADP(+) pocket. FAD contacts are provided by residues 51–54 (RAYS), 67–69 (FSI), 74–77 (GPLT), and Thr-117. Residues 144 to 145 (VR), 181 to 182 (TR), and Arg-190 each bind NADP(+). 254–258 (AFVEK) serves as a coordination point for FAD.

It belongs to the ferredoxin--NADP reductase type 1 family. In terms of assembly, monomer. The cofactor is FAD.

It catalyses the reaction 2 reduced [2Fe-2S]-[ferredoxin] + NADP(+) + H(+) = 2 oxidized [2Fe-2S]-[ferredoxin] + NADPH. Transports electrons between ferredoxin and NADPH. The polypeptide is Ferredoxin--NADP reductase (Azotobacter vinelandii).